We begin with the raw amino-acid sequence, 225 residues long: UPF0758 protein Sputw3181_0338 (225 aa).

In terms of domain architecture, MPN spans 102-224 (VLTNPDLTRD…IVSFAERGWI (123 aa)). The Zn(2+) site is built by His173, His175, and Asp186. The JAMM motif signature appears at 173-186 (HNHPSGIAEPSQAD).

The protein belongs to the UPF0758 family.

This chain is UPF0758 protein Sputw3181_0338, found in Shewanella sp. (strain W3-18-1).